We begin with the raw amino-acid sequence, 187 residues long: Flavin prenyltransferase UbiX (187 aa).

FMN-binding positions include 9–11, S34, and R123; that span reads GAS. Y153 and K169 together coordinate dimethylallyl phosphate.

Belongs to the UbiX/PAD1 family.

It catalyses the reaction dimethylallyl phosphate + FMNH2 = prenylated FMNH2 + phosphate. Its function is as follows. Flavin prenyltransferase that catalyzes the synthesis of the prenylated FMN cofactor (prenyl-FMN) for 4-hydroxy-3-polyprenylbenzoic acid decarboxylase UbiD. The prenyltransferase is metal-independent and links a dimethylallyl moiety from dimethylallyl monophosphate (DMAP) to the flavin N5 and C6 atoms of FMN. This chain is Flavin prenyltransferase UbiX, found in Helicobacter pylori (strain J99 / ATCC 700824) (Campylobacter pylori J99).